A 202-amino-acid polypeptide reads, in one-letter code: MDKFTTHTGVGIPLRRSNVDTDQIIPAVYLKRVTRTGFEDGLFAAWRNDPSFVLNNEGYAGASVLVAGPDFGTGSSREHAVWALQNYGFKVVISPRFADIFRGNSGKAGLLAAQVDESVVQKIWDLLDEHPGTAVTVDLESRTVRAGEGVDAIEASFDIDDYTRWRLLEGLDDIGITLGHADAIASYEATRPSWRPATIHAH.

Belongs to the LeuD family. LeuD type 1 subfamily. As to quaternary structure, heterodimer of LeuC and LeuD.

The enzyme catalyses (2R,3S)-3-isopropylmalate = (2S)-2-isopropylmalate. It participates in amino-acid biosynthesis; L-leucine biosynthesis; L-leucine from 3-methyl-2-oxobutanoate: step 2/4. Functionally, catalyzes the isomerization between 2-isopropylmalate and 3-isopropylmalate, via the formation of 2-isopropylmaleate. In Nocardioides sp. (strain ATCC BAA-499 / JS614), this protein is 3-isopropylmalate dehydratase small subunit.